The following is a 309-amino-acid chain: Wnt inhibitor of Dorsal protein (309 aa).

The first 16 residues, 1–16 (MIFAITFFMGITSTLA), serve as a signal peptide directing secretion. 10 disulfide bridges follow: cysteine 51–cysteine 62, cysteine 102–cysteine 110, cysteine 112–cysteine 121, cysteine 162–cysteine 179, cysteine 164–cysteine 174, cysteine 232–cysteine 269, cysteine 248–cysteine 262, cysteine 266–cysteine 308, cysteine 284–cysteine 299, and cysteine 286–cysteine 296.

The protein belongs to the Wnt family.

It is found in the secreted. It localises to the extracellular space. The protein localises to the extracellular matrix. Its function is as follows. Binds as a ligand to a family of frizzled seven-transmembrane receptors and acts through a cascade of genes on the nucleus. This Drosophila melanogaster (Fruit fly) protein is Wnt inhibitor of Dorsal protein (wntD).